The primary structure comprises 100 residues: MKGATVTRADLCEAVHEQVGLTRQDCAELVERVLELMCQALERGEQVKLSGFGVFQVRSKRARMGRNPKTGEPAAIEPRRVIGFRASQVMKARVDQALSR.

The protein belongs to the bacterial histone-like protein family. As to quaternary structure, heterodimer of an alpha and a beta chain.

Functionally, this protein is one of the two subunits of integration host factor, a specific DNA-binding protein that functions in genetic recombination as well as in transcriptional and translational control. In Phenylobacterium zucineum (strain HLK1), this protein is Integration host factor subunit alpha.